An 84-amino-acid chain; its full sequence is Small ribosomal subunit protein bS20 (84 aa).

The protein belongs to the bacterial ribosomal protein bS20 family.

In terms of biological role, binds directly to 16S ribosomal RNA. This is Small ribosomal subunit protein bS20 from Latilactobacillus sakei subsp. sakei (strain 23K) (Lactobacillus sakei subsp. sakei).